The sequence spans 380 residues: Glucose-1-phosphate adenylyltransferase (380 aa).

Alpha-D-glucose 1-phosphate is bound by residues glycine 164, 179–180 (EK), and serine 190.

The protein belongs to the bacterial/plant glucose-1-phosphate adenylyltransferase family. In terms of assembly, homotetramer.

It catalyses the reaction alpha-D-glucose 1-phosphate + ATP + H(+) = ADP-alpha-D-glucose + diphosphate. Its pathway is glycan biosynthesis; glycogen biosynthesis. Functionally, involved in the biosynthesis of ADP-glucose, a building block required for the elongation reactions to produce glycogen. Catalyzes the reaction between ATP and alpha-D-glucose 1-phosphate (G1P) to produce pyrophosphate and ADP-Glc. The protein is Glucose-1-phosphate adenylyltransferase of Lacticaseibacillus casei (strain BL23) (Lactobacillus casei).